We begin with the raw amino-acid sequence, 81 residues long: U12-hexatoxin-Mg1a (81 aa).

Positions 1–24 are cleaved as a signal peptide; the sequence is MKAPATIVILIMSLISVLWATADT. Residues 25–50 constitute a propeptide that is removed on maturation; the sequence is EDGNLLFPIEDFIRKFDEYPVQPKER. Cystine bridges form between cysteine 52–cysteine 66, cysteine 59–cysteine 71, and cysteine 65–cysteine 75. A Proline amide modification is found at proline 78.

As to expression, expressed by the venom gland.

Its subcellular location is the secreted. Its function is as follows. Blocks voltage-gated sodium channels (Nav). Intracranial injection into mice causes lacrimation, slow breathing and death. Intrathorax injection into crickets causes death. This is U12-hexatoxin-Mg1a from Macrothele gigas (Japanese funnel web spider).